We begin with the raw amino-acid sequence, 284 residues long: UPF0761 membrane protein IL2447 (284 aa).

The next 6 membrane-spanning stretches (helical) occupy residues 41-61 (MLSL…FPMF), 98-118 (MTAI…SAID), 137-157 (FAVY…GLAA), 178-198 (FVLW…MYQL), 214-234 (VIAA…ITFF), and 247-267 (IPIL…GAVL).

Belongs to the UPF0761 family.

The protein resides in the cell inner membrane. The polypeptide is UPF0761 membrane protein IL2447 (Idiomarina loihiensis (strain ATCC BAA-735 / DSM 15497 / L2-TR)).